Here is a 549-residue protein sequence, read N- to C-terminus: Ankyrin repeat domain-containing protein SOWAHA (549 aa).

The N-terminal stretch at 1–17 (MALAAAAAAAAAGVSQA) is a signal peptide. Disordered regions lie at residues 82 to 219 (KPRP…PCML) and 235 to 256 (EEPG…PLLL). Positions 203-216 (PGPGAAKGPPQQKP) are enriched in low complexity. The span at 235–248 (EEPGLRRQLSEEPS) shows a compositional bias: basic and acidic residues. S260 is subject to Phosphoserine. ANK repeat units lie at residues 345-374 (SGFT…RSGA) and 384-414 (GGYT…QVHV). The tract at residues 513–549 (PRKKTKIRGGLPAFSEISRRPTPGPLAGLVPSLPPTT) is disordered.

Belongs to the SOWAH family.

The protein is Ankyrin repeat domain-containing protein SOWAHA (SOWAHA) of Homo sapiens (Human).